Here is a 120-residue protein sequence, read N- to C-terminus: Large ribosomal subunit protein bL17 (120 aa).

This sequence belongs to the bacterial ribosomal protein bL17 family. Part of the 50S ribosomal subunit. Contacts protein L32.

This is Large ribosomal subunit protein bL17 from Mesomycoplasma hyopneumoniae (strain 232) (Mycoplasma hyopneumoniae).